Here is a 115-residue protein sequence, read N- to C-terminus: Large ribosomal subunit protein P2x (115 aa).

The disordered stretch occupies residues 78–115 (GGGGGAASAAEPVAESKKKVEEVKDESSDDAGMMGLFD). A compositionally biased stretch (basic and acidic residues) spans 91–103 (AESKKKVEEVKDE). 2 positions are modified to phosphoserine: Ser-104 and Ser-105.

The protein belongs to the eukaryotic ribosomal protein P1/P2 family. As to quaternary structure, P1 and P2 exist as dimers at the large ribosomal subunit.

Plays an important role in the elongation step of protein synthesis. This is Large ribosomal subunit protein P2x (RPP2C) from Arabidopsis thaliana (Mouse-ear cress).